Here is a 149-residue protein sequence, read N- to C-terminus: FAD synthase (149 aa).

ATP is bound by residues 15–16 (VF), 20–23 (HVGH), and Asp101.

It belongs to the archaeal FAD synthase family. In terms of assembly, homodimer. A divalent metal cation is required as a cofactor.

The catalysed reaction is FMN + ATP + H(+) = FAD + diphosphate. It participates in cofactor biosynthesis; FAD biosynthesis; FAD from FMN: step 1/1. Functionally, catalyzes the transfer of the AMP portion of ATP to flavin mononucleotide (FMN) to produce flavin adenine dinucleotide (FAD) coenzyme. The sequence is that of FAD synthase from Thermococcus kodakarensis (strain ATCC BAA-918 / JCM 12380 / KOD1) (Pyrococcus kodakaraensis (strain KOD1)).